A 314-amino-acid polypeptide reads, in one-letter code: 4-hydroxy-3-methylbut-2-enyl diphosphate reductase (314 aa).

Cysteine 12 serves as a coordination point for [4Fe-4S] cluster. Residues histidine 41 and histidine 74 each contribute to the (2E)-4-hydroxy-3-methylbut-2-enyl diphosphate site. Dimethylallyl diphosphate contacts are provided by histidine 41 and histidine 74. Isopentenyl diphosphate contacts are provided by histidine 41 and histidine 74. A [4Fe-4S] cluster-binding site is contributed by cysteine 96. Histidine 124 provides a ligand contact to (2E)-4-hydroxy-3-methylbut-2-enyl diphosphate. Histidine 124 serves as a coordination point for dimethylallyl diphosphate. Residue histidine 124 coordinates isopentenyl diphosphate. The Proton donor role is filled by glutamate 126. Position 167 (threonine 167) interacts with (2E)-4-hydroxy-3-methylbut-2-enyl diphosphate. [4Fe-4S] cluster is bound at residue cysteine 197. (2E)-4-hydroxy-3-methylbut-2-enyl diphosphate-binding residues include serine 225, serine 226, asparagine 227, and serine 269. Dimethylallyl diphosphate is bound by residues serine 225, serine 226, asparagine 227, and serine 269. Residues serine 225, serine 226, asparagine 227, and serine 269 each coordinate isopentenyl diphosphate.

The protein belongs to the IspH family. It depends on [4Fe-4S] cluster as a cofactor.

The enzyme catalyses isopentenyl diphosphate + 2 oxidized [2Fe-2S]-[ferredoxin] + H2O = (2E)-4-hydroxy-3-methylbut-2-enyl diphosphate + 2 reduced [2Fe-2S]-[ferredoxin] + 2 H(+). It catalyses the reaction dimethylallyl diphosphate + 2 oxidized [2Fe-2S]-[ferredoxin] + H2O = (2E)-4-hydroxy-3-methylbut-2-enyl diphosphate + 2 reduced [2Fe-2S]-[ferredoxin] + 2 H(+). Its pathway is isoprenoid biosynthesis; dimethylallyl diphosphate biosynthesis; dimethylallyl diphosphate from (2E)-4-hydroxy-3-methylbutenyl diphosphate: step 1/1. The protein operates within isoprenoid biosynthesis; isopentenyl diphosphate biosynthesis via DXP pathway; isopentenyl diphosphate from 1-deoxy-D-xylulose 5-phosphate: step 6/6. Its function is as follows. Catalyzes the conversion of 1-hydroxy-2-methyl-2-(E)-butenyl 4-diphosphate (HMBPP) into a mixture of isopentenyl diphosphate (IPP) and dimethylallyl diphosphate (DMAPP). Acts in the terminal step of the DOXP/MEP pathway for isoprenoid precursor biosynthesis. This chain is 4-hydroxy-3-methylbut-2-enyl diphosphate reductase, found in Haemophilus influenzae (strain PittGG).